A 593-amino-acid polypeptide reads, in one-letter code: Methionine--tRNA ligase, mitochondrial (593 aa).

The transit peptide at 1 to 29 directs the protein to the mitochondrion; it reads MLRTSVLRLLGRTGASRLSLLEDFGPRYY. The 'HIGH' region motif lies at 52–62; the sequence is FYVNAAPHIGH. Residues 347–351 carry the 'KMSKS' region motif; that stretch reads KMSKS. ATP is bound at residue K350.

This sequence belongs to the class-I aminoacyl-tRNA synthetase family.

Its subcellular location is the mitochondrion matrix. It carries out the reaction tRNA(Met) + L-methionine + ATP = L-methionyl-tRNA(Met) + AMP + diphosphate. The protein is Methionine--tRNA ligase, mitochondrial (MARS2) of Homo sapiens (Human).